We begin with the raw amino-acid sequence, 304 residues long: Protease HtpX homolog (304 aa).

The next 2 helical transmembrane spans lie at 14–34 and 39–59; these read IFII…IGII and YLNG…IMVM. Residue His-144 participates in Zn(2+) binding. Glu-145 is a catalytic residue. A Zn(2+)-binding site is contributed by His-148. A run of 2 helical transmembrane segments spans residues 159 to 179 and 202 to 222; these read IAIA…RMIF and AIIY…ATAI. Glu-231 provides a ligand contact to Zn(2+).

The protein belongs to the peptidase M48B family. The cofactor is Zn(2+).

It localises to the cell membrane. The protein is Protease HtpX homolog of Listeria monocytogenes serotype 4b (strain CLIP80459).